The sequence spans 157 residues: MALIPKEVFFVSGVGRHEDELVSFELALRDAGIERFNLVPVSSIVPPGCRVVSKEEGLRKLSPGQIVFCVMARYASNVEGREIFASVGAAFPEDKDMNGYIAEHSGEWYEGAEQHAKRLAEEMLKTQGSKVARTFAITARGKVKEFTTAVAAAVFVI.

Ser-43 is subject to Pyruvic acid (Ser).

Belongs to the PdaD family. Requires pyruvate as cofactor.

It carries out the reaction L-arginine + H(+) = agmatine + CO2. The polypeptide is Pyruvoyl-dependent arginine decarboxylase 2 (pdaD2) (Archaeoglobus fulgidus (strain ATCC 49558 / DSM 4304 / JCM 9628 / NBRC 100126 / VC-16)).